The primary structure comprises 204 residues: MGSRSGEQGKRMAELSKNLKEGERILEPTRRPDGTLRKPIRIRPGYTPEDEVVKYQSKGSLMKKEMASQGPPGYEPDPAPKPKTKAAKRNERKKEKRLQATAEKANSSEDGSASNGSQSVNVLASEMEALDVSSNNDVCGGAPNPGTTGEDVEKRIRALKKKIRLTEAQQQKTASRDLNPEQLEKFSKLEEWRQELKALEDKAA.

Disordered stretches follow at residues 1-121 (MGSR…QSVN) and 133-153 (SSNN…EDVE). The span at 7-36 (EQGKRMAELSKNLKEGERILEPTRRPDGTL) shows a compositional bias: basic and acidic residues. Residues 104-121 (KANSSEDGSASNGSQSVN) show a composition bias toward polar residues. The short motif at 195–200 (ELKALE) is the Nuclear export signal element.

Belongs to the pym family. As to quaternary structure, interacts with MAGO and Y14. In terms of tissue distribution, expressed in root and shoot meristems, cotyledons, vascular tissues of leaves, receptacle of flowers and siliques, and pollen grains.

The protein resides in the cytoplasm. It is found in the nucleus. The protein localises to the nucleolus. It localises to the nucleoplasm. In terms of biological role, key regulator of the exon junction complex (EJC), a multiprotein complex that associates immediately upstream of the exon-exon junction on mRNAs and serves as a positional landmark for the intron exon structure of genes and directs post-transcriptional processes in the cytoplasm such as mRNA export, nonsense-mediated mRNA decay (NMD) or translation. Acts as an EJC disassembly factor, allowing translation-dependent EJC removal and recycling by disrupting mature EJC from spliced mRNAs. Can increase in vitro the expression from reporter constructs that contain leader introns required for the expression of different genes. In association with MAGO and PYM, participates in intron-mediated enhancement of gene expression. The polypeptide is Partner of Y14 and mago (Arabidopsis thaliana (Mouse-ear cress)).